Here is a 797-residue protein sequence, read N- to C-terminus: Probable DNA polymerase (797 aa).

Belongs to the DNA polymerase type-B family.

The protein resides in the mitochondrion. The catalysed reaction is DNA(n) + a 2'-deoxyribonucleoside 5'-triphosphate = DNA(n+1) + diphosphate. This Agaricus bitorquis (Pavement mushroom) protein is Probable DNA polymerase.